The following is a 317-amino-acid chain: Putative pyridoxal kinase BUD17 (317 aa).

Substrate contacts are provided by Ser-16 and Tyr-128. Residues 190–191 (TS) and 220–232 (EIPKINAKFSGSG) contribute to the ATP site. Asp-233 contacts substrate.

It belongs to the pyridoxine kinase family. The cofactor is a divalent metal cation.

The protein resides in the cytoplasm. It is found in the nucleus. The catalysed reaction is pyridoxal + ATP = pyridoxal 5'-phosphate + ADP + H(+). Functionally, required for synthesis of pyridoxal-5-phosphate from vitamin B6. Important for bud site selection. This chain is Putative pyridoxal kinase BUD17 (BUD17), found in Saccharomyces cerevisiae (strain ATCC 204508 / S288c) (Baker's yeast).